A 453-amino-acid chain; its full sequence is MERTCLAVILAAGDSTRMKSSKSKVLHPVAGRPMIAHVVEAVASAGISSVALVVGRDAGEVAKAASIDGVGIEAYLQQQRLGTGHAVLAAREAIAKGYDDILVTYGDVPLQTNGPLKAARQGLAEGSDVVVIGFHTDRPTGYGRLLVKDGELIAIREEKDASDAERAVTWCNSGLMAINGRKALDLLSRIGNANAKGEFYLTDLVEIARSLGGRVTAVDAPEIEMTGCNNRAELAVIERFWQERRRREMMLAGVTMIAPETVFLSYDTVIGQDALIEPNVVFGPGAVIDSGAVIHAFSHIEGAHVSEGATVGPFARLRPGADLAMGSKVGNFCEVKNGRIGVGAKVNHLTYIGDAVVGAGSNIGAGTITCNYDGVNKSETVIGENAFIGSNSSLVAPVTIGDGAYIASGSVITVDVPADALALGRARQEIKPGRATLLRQRALAIKAAKKAEA.

The tract at residues 1–231 (MERTCLAVIL…EIEMTGCNNR (231 aa)) is pyrophosphorylase. UDP-N-acetyl-alpha-D-glucosamine contacts are provided by residues 10–13 (LAAG), Lys24, Gln77, 82–83 (GT), 105–107 (YGD), Gly143, Glu157, Asn172, and Asn229. Asp107 serves as a coordination point for Mg(2+). Asn229 is a binding site for Mg(2+). A linker region spans residues 232–252 (AELAVIERFWQERRRREMMLA). The segment at 253–453 (GVTMIAPETV…AIKAAKKAEA (201 aa)) is N-acetyltransferase. UDP-N-acetyl-alpha-D-glucosamine-binding residues include Arg318 and Lys336. His348 serves as the catalytic Proton acceptor. 2 residues coordinate UDP-N-acetyl-alpha-D-glucosamine: Tyr351 and Asn362. Acetyl-CoA contacts are provided by residues Ala365, 371-372 (NY), Ser390, Ser408, and Arg425.

The protein in the N-terminal section; belongs to the N-acetylglucosamine-1-phosphate uridyltransferase family. This sequence in the C-terminal section; belongs to the transferase hexapeptide repeat family. As to quaternary structure, homotrimer. The cofactor is Mg(2+).

Its subcellular location is the cytoplasm. It carries out the reaction alpha-D-glucosamine 1-phosphate + acetyl-CoA = N-acetyl-alpha-D-glucosamine 1-phosphate + CoA + H(+). It catalyses the reaction N-acetyl-alpha-D-glucosamine 1-phosphate + UTP + H(+) = UDP-N-acetyl-alpha-D-glucosamine + diphosphate. Its pathway is nucleotide-sugar biosynthesis; UDP-N-acetyl-alpha-D-glucosamine biosynthesis; N-acetyl-alpha-D-glucosamine 1-phosphate from alpha-D-glucosamine 6-phosphate (route II): step 2/2. It functions in the pathway nucleotide-sugar biosynthesis; UDP-N-acetyl-alpha-D-glucosamine biosynthesis; UDP-N-acetyl-alpha-D-glucosamine from N-acetyl-alpha-D-glucosamine 1-phosphate: step 1/1. The protein operates within bacterial outer membrane biogenesis; LPS lipid A biosynthesis. In terms of biological role, catalyzes the last two sequential reactions in the de novo biosynthetic pathway for UDP-N-acetylglucosamine (UDP-GlcNAc). The C-terminal domain catalyzes the transfer of acetyl group from acetyl coenzyme A to glucosamine-1-phosphate (GlcN-1-P) to produce N-acetylglucosamine-1-phosphate (GlcNAc-1-P), which is converted into UDP-GlcNAc by the transfer of uridine 5-monophosphate (from uridine 5-triphosphate), a reaction catalyzed by the N-terminal domain. The sequence is that of Bifunctional protein GlmU from Rhizobium etli (strain ATCC 51251 / DSM 11541 / JCM 21823 / NBRC 15573 / CFN 42).